Consider the following 270-residue polypeptide: Acyl-[acyl-carrier-protein]--UDP-N-acetylglucosamine O-acyltransferase (270 aa).

This sequence belongs to the transferase hexapeptide repeat family. LpxA subfamily. Homotrimer.

It is found in the cytoplasm. The catalysed reaction is a (3R)-hydroxyacyl-[ACP] + UDP-N-acetyl-alpha-D-glucosamine = a UDP-3-O-[(3R)-3-hydroxyacyl]-N-acetyl-alpha-D-glucosamine + holo-[ACP]. Its pathway is glycolipid biosynthesis; lipid IV(A) biosynthesis; lipid IV(A) from (3R)-3-hydroxytetradecanoyl-[acyl-carrier-protein] and UDP-N-acetyl-alpha-D-glucosamine: step 1/6. In terms of biological role, involved in the biosynthesis of lipid A, a phosphorylated glycolipid that anchors the lipopolysaccharide to the outer membrane of the cell. The chain is Acyl-[acyl-carrier-protein]--UDP-N-acetylglucosamine O-acyltransferase from Helicobacter pylori (strain Shi470).